Here is a 396-residue protein sequence, read N- to C-terminus: Ribosomal RNA large subunit methyltransferase I (396 aa).

The PUA domain maps to 2-79; that stretch reads AIRIKLKPGR…REEEIDRAFF (78 aa).

This sequence belongs to the methyltransferase superfamily. RlmI family.

It localises to the cytoplasm. The enzyme catalyses cytidine(1962) in 23S rRNA + S-adenosyl-L-methionine = 5-methylcytidine(1962) in 23S rRNA + S-adenosyl-L-homocysteine + H(+). Functionally, specifically methylates the cytosine at position 1962 (m5C1962) of 23S rRNA. This Shewanella putrefaciens (strain CN-32 / ATCC BAA-453) protein is Ribosomal RNA large subunit methyltransferase I.